A 205-amino-acid chain; its full sequence is Small ribosomal subunit protein uS4B (205 aa).

Residues 94 to 157 (RRLDNVVFRA…LNLPIVLGTL (64 aa)) form the S4 RNA-binding domain.

This sequence belongs to the universal ribosomal protein uS4 family. Part of the 30S ribosomal subunit. Contacts protein S5. The interaction surface between S4 and S5 is involved in control of translational fidelity.

In terms of biological role, one of the primary rRNA binding proteins, it binds directly to 16S rRNA where it nucleates assembly of the body of the 30S subunit. Its function is as follows. With S5 and S12 plays an important role in translational accuracy. This chain is Small ribosomal subunit protein uS4B, found in Nitrosomonas europaea (strain ATCC 19718 / CIP 103999 / KCTC 2705 / NBRC 14298).